Here is a 308-residue protein sequence, read N- to C-terminus: Taste receptor type 2 member 10 (308 aa).

Topologically, residues 1–6 are extracellular; that stretch reads MLSVVE. Residues 7–27 traverse the membrane as a helical segment; it reads GIFIFVVISESVFGVLGNGFI. Residues 28–42 are Cytoplasmic-facing; the sequence is GLVNCIDCAKNKLST. A helical transmembrane segment spans residues 43–63; the sequence is IGFILTGLAISRIFLIWVIIT. Topologically, residues 64 to 100 are extracellular; the sequence is DGFIQIFSPDIYASGNLIEYISYIWVIGNQSSMWFAT. Asparagine 92 carries N-linked (GlcNAc...) asparagine glycosylation. Residues 101-121 form a helical membrane-spanning segment; that stretch reads SLSIFYFLKIANFSNYIFLWL. The Cytoplasmic segment spans residues 122-126; the sequence is KSRTN. A helical membrane pass occupies residues 127-147; sequence MVLPFMMAFLLISSLLNFAHI. Topologically, residues 148–179 are extracellular; the sequence is VKILNDHKMKNDTVWHLNMYKSEYFIKQILLN. A glycan (N-linked (GlcNAc...) asparagine) is linked at asparagine 158. The helical transmembrane segment at 180–200 threads the bilayer; the sequence is LGVIFFFTLSLITCVLLIISL. Residues 201–227 lie on the Cytoplasmic side of the membrane; that stretch reads WRHNRQMQSNVTGLRDSNTEAHVKAMK. Residues 228–248 traverse the membrane as a helical segment; sequence VLISFIILFILYFIGMALEIS. Residues 249–257 lie on the Extracellular side of the membrane; it reads RFTVPENKL. A helical transmembrane segment spans residues 258–278; that stretch reads LLMFGMTTTAIYPWGHSFILI. The Cytoplasmic portion of the chain corresponds to 279-308; sequence LGNSKLKQASLRVLQQLKCCEKRKKSQSHI.

It belongs to the G-protein coupled receptor T2R family.

The protein resides in the membrane. Its function is as follows. Receptor that may play a role in the perception of bitterness and is gustducin-linked. May play a role in sensing the chemical composition of the gastrointestinal content. The activity of this receptor may stimulate alpha gustducin, mediate PLC-beta-2 activation and lead to the gating of TRPM5. The sequence is that of Taste receptor type 2 member 10 (TAS2R10) from Pongo pygmaeus (Bornean orangutan).